We begin with the raw amino-acid sequence, 164 residues long: uncharacterized protein (164 aa).

Residue Ser-117 is modified to Phosphoserine.

This is an uncharacterized protein from Bacillus subtilis (strain 168).